Here is a 272-residue protein sequence, read N- to C-terminus: Dihydropteroate synthase (272 aa).

The Pterin-binding domain maps to 1-256; sequence MIKTKIMGIL…NVLLNTRLAQ (256 aa). Asn11 serves as a coordination point for Mg(2+). (7,8-dihydropterin-6-yl)methyl diphosphate contacts are provided by residues Thr51, Asp89, Asn108, Asp172, Lys208, and 244 to 246; that span reads RVH.

Belongs to the DHPS family. Homodimer. Mg(2+) serves as cofactor.

The catalysed reaction is (7,8-dihydropterin-6-yl)methyl diphosphate + 4-aminobenzoate = 7,8-dihydropteroate + diphosphate. It functions in the pathway cofactor biosynthesis; tetrahydrofolate biosynthesis; 7,8-dihydrofolate from 2-amino-4-hydroxy-6-hydroxymethyl-7,8-dihydropteridine diphosphate and 4-aminobenzoate: step 1/2. In terms of biological role, catalyzes the condensation of para-aminobenzoate (pABA) with 6-hydroxymethyl-7,8-dihydropterin diphosphate (DHPt-PP) to form 7,8-dihydropteroate (H2Pte), the immediate precursor of folate derivatives. The chain is Dihydropteroate synthase (folP) from Staphylococcus epidermidis (strain ATCC 12228 / FDA PCI 1200).